The chain runs to 129 residues: Small ribosomal subunit protein uS11 (129 aa).

The protein belongs to the universal ribosomal protein uS11 family. As to quaternary structure, part of the 30S ribosomal subunit. Interacts with proteins S7 and S18. Binds to IF-3.

Functionally, located on the platform of the 30S subunit, it bridges several disparate RNA helices of the 16S rRNA. Forms part of the Shine-Dalgarno cleft in the 70S ribosome. In Macrococcus caseolyticus (strain JCSC5402) (Macrococcoides caseolyticum), this protein is Small ribosomal subunit protein uS11.